The chain runs to 660 residues: Cullin-associated NEDD8-dissociated protein 1 homolog (660 aa).

Lys-16 is covalently cross-linked (Glycyl lysine isopeptide (Lys-Gly) (interchain with G-Cter in NEDD8)). Residues 339-364 (TQNENDHGSDNLIDSDDGFGSDNDPE) are disordered. Residues 351-363 (IDSDDGFGSDNDP) are compositionally biased toward acidic residues.

In terms of assembly, interacts with unneddylated cullin CDC53. Post-translationally, neddylated at Lys-16.

Functionally, assembly factor of SCF (SKP1-CUL1-F-box protein) E3 ubiquitin ligase complexes that promotes the exchange of the substrate-recognition F-box subunit in SCF complexes, thereby playing a key role in the cellular repertoire of SCF complexes. Acts as a F-box protein exchange factor. Involved in the aging process. Longevity-assurance protein. The chain is Cullin-associated NEDD8-dissociated protein 1 homolog (LAG2) from Saccharomyces cerevisiae (strain ATCC 204508 / S288c) (Baker's yeast).